Consider the following 229-residue polypeptide: MEGSHFAIKDWSEDDKPREKLMLKGKEALSDAELMAILIGSGSRNESAVALSQRILASAKNLNSLWKMSVSQLIKFKGIGEAKAVSIVAALELGRRQRAEDILKLKKITSSKDAFTIMQPIIGELPHEEFWVLFLNNSNKVISKAQLSKGGIAGTIVDVRLVFKLGLENGATGLILCHNHPSGELNPSQADKQITKKIKTAGEILDVKILDHLIITETKYYSFVDEGIF.

The region spanning 107–229 (KITSSKDAFT…YYSFVDEGIF (123 aa)) is the MPN domain. Zn(2+)-binding residues include His178, His180, and Asp191. A JAMM motif motif is present at residues 178-191 (HNHPSGELNPSQAD).

This sequence belongs to the UPF0758 family.

The protein is UPF0758 protein Fjoh_0413 of Flavobacterium johnsoniae (strain ATCC 17061 / DSM 2064 / JCM 8514 / BCRC 14874 / CCUG 350202 / NBRC 14942 / NCIMB 11054 / UW101) (Cytophaga johnsonae).